The following is a 197-amino-acid chain: Adrenodoxin-like protein 2, mitochondrial (197 aa).

A mitochondrion-targeting transit peptide spans 1-74 (MVFHRLSRLG…TSFSTTSEKG (74 aa)). The region spanning 81–184 (INVTFVDKDG…GVRLAIPSAT (104 aa)) is the 2Fe-2S ferredoxin-type domain. [2Fe-2S] cluster-binding residues include C118, C124, C127, and C165.

This sequence belongs to the adrenodoxin/putidaredoxin family. [2Fe-2S] cluster serves as cofactor.

Its subcellular location is the mitochondrion. Its function is as follows. Associates with the adrenodoxin reductase MFDR to form an efficient low potential electron transfer chain that is able to reduce cytochrome C. The polypeptide is Adrenodoxin-like protein 2, mitochondrial (Arabidopsis thaliana (Mouse-ear cress)).